The chain runs to 479 residues: D-hydantoinase/dihydropyrimidinase (479 aa).

Residues histidine 59, histidine 61, and lysine 150 each contribute to the Zn(2+) site. Lysine 150 is modified (N6-carboxylysine). Residue tyrosine 155 participates in substrate binding. Zn(2+) contacts are provided by histidine 183 and histidine 239. Serine 289 is a substrate binding site. Aspartate 316 contributes to the Zn(2+) binding site. Substrate is bound at residue asparagine 337.

The protein belongs to the metallo-dependent hydrolases superfamily. Hydantoinase/dihydropyrimidinase family. As to quaternary structure, homotetramer. Zn(2+) serves as cofactor. Post-translationally, carboxylation allows a single lysine to coordinate two zinc ions.

It carries out the reaction 5,6-dihydrouracil + H2O = 3-(carbamoylamino)propanoate + H(+). Its function is as follows. Catalyzes the hydrolysis of dihydropyrimidines and of the structurally related DL-5-mono-substituted hydantoins, to produce N-carbamoyl-D-amino acids. This chain is D-hydantoinase/dihydropyrimidinase (dht), found in Pseudomonas aeruginosa (strain ATCC 15692 / DSM 22644 / CIP 104116 / JCM 14847 / LMG 12228 / 1C / PRS 101 / PAO1).